A 518-amino-acid polypeptide reads, in one-letter code: Protein nucleotidyltransferase YdiU (518 aa).

8 residues coordinate ATP: G100, G102, R103, K123, D135, G136, R193, and R200. D270 (proton acceptor) is an active-site residue. Mg(2+)-binding residues include N271 and D280. Position 280 (D280) interacts with ATP.

The protein belongs to the SELO family. Mg(2+) serves as cofactor. The cofactor is Mn(2+).

It carries out the reaction L-seryl-[protein] + ATP = 3-O-(5'-adenylyl)-L-seryl-[protein] + diphosphate. It catalyses the reaction L-threonyl-[protein] + ATP = 3-O-(5'-adenylyl)-L-threonyl-[protein] + diphosphate. The enzyme catalyses L-tyrosyl-[protein] + ATP = O-(5'-adenylyl)-L-tyrosyl-[protein] + diphosphate. The catalysed reaction is L-histidyl-[protein] + UTP = N(tele)-(5'-uridylyl)-L-histidyl-[protein] + diphosphate. It carries out the reaction L-seryl-[protein] + UTP = O-(5'-uridylyl)-L-seryl-[protein] + diphosphate. It catalyses the reaction L-tyrosyl-[protein] + UTP = O-(5'-uridylyl)-L-tyrosyl-[protein] + diphosphate. Its function is as follows. Nucleotidyltransferase involved in the post-translational modification of proteins. It can catalyze the addition of adenosine monophosphate (AMP) or uridine monophosphate (UMP) to a protein, resulting in modifications known as AMPylation and UMPylation. This Xanthomonas oryzae pv. oryzae (strain PXO99A) protein is Protein nucleotidyltransferase YdiU.